The sequence spans 85 residues: Small ribosomal subunit protein uS15c (85 aa).

It belongs to the universal ribosomal protein uS15 family. In terms of assembly, part of the 30S ribosomal subunit.

It is found in the plastid. Its subcellular location is the chloroplast. The polypeptide is Small ribosomal subunit protein uS15c (rps15) (Chaetosphaeridium globosum (Charophycean green alga)).